A 487-amino-acid chain; its full sequence is Cell wall protein TIR4 (487 aa).

Positions 1 to 22 (MAYSKITLLAALAAIAYAQTQA) are cleaved as a signal peptide. 11 consecutive repeat copies span residues 137–148 (SSSVAPSSSEVV), 149–160 (SSSVAPSSSEVV), 161–172 (SSSVAPSSSEVV), 173–184 (SSSVASSSSEVA), 185–196 (SSSVAPSSSEVV), 197–208 (SSSVASSSSEVA), 209–220 (SSSVAPSSSEVV), 221–232 (SSSVAPSSSEVV), 233–244 (SSSVASSSSEVA), 245–256 (SSSVAPSSSEVV), and 257–268 (SSSVASSTSEAT). The segment at 137–268 (SSSVAPSSSE…SVASSTSEAT (132 aa)) is 11 X 12 AA approximate tandem repeats, Ser-rich. Residues 206–299 (EVASSSVAPS…SVSSSSAVSS (94 aa)) are disordered. 5 N-linked (GlcNAc...) asparagine glycosylation sites follow: asparagine 327, asparagine 348, asparagine 368, asparagine 403, and asparagine 404. Asparagine 465 carries GPI-anchor amidated asparagine lipidation. A propeptide spans 466–487 (GAAKAVIGMGAGALAAVAAMLL) (removed in mature form).

This sequence belongs to the SRP1/TIP1 family. Post-translationally, the GPI-anchor is attached to the protein in the endoplasmic reticulum and serves to target the protein to the cell surface. There, the glucosamine-inositol phospholipid moiety is cleaved off and the GPI-modified mannoprotein is covalently attached via its lipidless GPI glycan remnant to the 1,6-beta-glucan of the outer cell wall layer.

It localises to the secreted. Its subcellular location is the cell wall. It is found in the membrane. In terms of biological role, component of the cell wall. Required for anaerobic growth. In Saccharomyces cerevisiae (strain ATCC 204508 / S288c) (Baker's yeast), this protein is Cell wall protein TIR4 (TIR4).